The sequence spans 555 residues: CTP synthase (555 aa).

The segment at 1-272 is amidoligase domain; it reads MQPTSTTTKH…DAYVVRKLDL (272 aa). A CTP-binding site is contributed by Ser19. A UTP-binding site is contributed by Ser19. ATP contacts are provided by residues 20–25 and Asp77; that span reads SLGKGL. Mg(2+) contacts are provided by Asp77 and Glu146. Residues 153 to 155, 193 to 198, and Lys229 contribute to the CTP site; these read DIE and KTKPTQ. UTP contacts are provided by residues 193–198 and Lys229; that span reads KTKPTQ. In terms of domain architecture, Glutamine amidotransferase type-1 spans 297–548; it reads TVALVGKYID…VKAAVARQVA (252 aa). An L-glutamine-binding site is contributed by Gly360. Residue Cys387 is the Nucleophile; for glutamine hydrolysis of the active site. L-glutamine-binding positions include 388–391, Glu411, and Arg473; that span reads LGLQ. Active-site residues include His521 and Glu523.

This sequence belongs to the CTP synthase family. As to quaternary structure, homotetramer.

The enzyme catalyses UTP + L-glutamine + ATP + H2O = CTP + L-glutamate + ADP + phosphate + 2 H(+). It carries out the reaction L-glutamine + H2O = L-glutamate + NH4(+). The catalysed reaction is UTP + NH4(+) + ATP = CTP + ADP + phosphate + 2 H(+). It participates in pyrimidine metabolism; CTP biosynthesis via de novo pathway; CTP from UDP: step 2/2. With respect to regulation, allosterically activated by GTP, when glutamine is the substrate; GTP has no effect on the reaction when ammonia is the substrate. The allosteric effector GTP functions by stabilizing the protein conformation that binds the tetrahedral intermediate(s) formed during glutamine hydrolysis. Inhibited by the product CTP, via allosteric rather than competitive inhibition. In terms of biological role, catalyzes the ATP-dependent amination of UTP to CTP with either L-glutamine or ammonia as the source of nitrogen. Regulates intracellular CTP levels through interactions with the four ribonucleotide triphosphates. The chain is CTP synthase from Streptomyces griseus subsp. griseus (strain JCM 4626 / CBS 651.72 / NBRC 13350 / KCC S-0626 / ISP 5235).